The following is a 101-amino-acid chain: Small ribosomal subunit protein uS14 (101 aa).

Residues 44-74 form a disordered region; the sequence is ASRKLSRLPRDSSPVRLRNRDQVDGRPRGYV. The segment covering 61-70 has biased composition (basic and acidic residues); sequence RNRDQVDGRP.

It belongs to the universal ribosomal protein uS14 family. As to quaternary structure, part of the 30S ribosomal subunit. Contacts proteins S3 and S10.

Functionally, binds 16S rRNA, required for the assembly of 30S particles and may also be responsible for determining the conformation of the 16S rRNA at the A site. This is Small ribosomal subunit protein uS14 from Cutibacterium acnes (strain DSM 16379 / KPA171202) (Propionibacterium acnes).